Here is a 265-residue protein sequence, read N- to C-terminus: Oxidoreductase nsrR (265 aa).

It belongs to the avfA family.

It participates in secondary metabolite biosynthesis. Oxidoreductase; part of the gene cluster that mediates the biosynthesis of the tetrahydroxanthone dimer neosartorin, which exhibits antibacterial activity. The two different monomeric units appear to be synthesized by the same set of enzymes, among which the Baeyer-Villiger monooxygenase nsrF is the key enzyme for the divergence of the biosynthetic routes. The pathway begins with the synthesis of atrochrysone thioester by the polyketide synthase nsrB. The atrochrysone carboxyl ACP thioesterase nsrC then breaks the thioester bond and releases the atrochrysone carboxylic acid from AacuL. Atrochrysone carboxylic acid is decarboxylated by the decarboxylase nsrE, and oxidized by the anthrone oxygenase nsrD to yield emodin. Emodin is then reduced to emodin hydroquinone by the oxidoreductase nsrR. A-ring reduction by the short chain dehydrogenase nsrJ, dehydration by the scytalone dehydratase-like protein nsrI and probable spontaneous re-oxidation, results in overall deoxygenation to chrysophanol. The Baeyer-Villiger monooxygenase nsrF accepts chrysophanol as a substrate to insert one oxygen atom at two different positions to yield the precursors of both monomric units. NsrF is promiscuous/flexible in interacting with the 2 (non methylated and methylated) aromatic rings of chrysophanol, thus diverging the biosynthetic pathway at this point. After the hydrolysis of the lactones, methylesterification by the methyltransferase nsrG yields respectively moniliphenone and 2,2',6'-trihydroxy-4-methyl-6-methoxya-cyldiphenylmethanone. The next steps are the hydroxylation by the FAD-dependent monooxygenase nsrK, followed by isomerization by the monooxygenase nsrQ. The short chain dehydrogenase/reductase nsrO then catalyzes the C-5 ketoreduction to give the xanthone skeleton of blennolide C and 5-acetylblennolide A. The acetyltransferase nsrL has a strict substrate specificity and uses only blennolide A but not blennolide C to yield 5-acetylblennolide A as the single-acetylated product. In the final step of the biosynthesis, the heterodimerization of the 2 xanthones, blennolide C and 5-acetylblennolide A, is catalyzed by the cytochrome P450 monooxygenase nsrP. NsrP can utilize at least three different xanthones as its substrates to perform the dimerization reaction. The chain is Oxidoreductase nsrR from Aspergillus novofumigatus (strain IBT 16806).